Reading from the N-terminus, the 119-residue chain is Protein TusC (119 aa).

This sequence belongs to the DsrF/TusC family. As to quaternary structure, heterohexamer, formed by a dimer of trimers. The hexameric TusBCD complex contains 2 copies each of TusB, TusC and TusD. The TusBCD complex interacts with TusE.

It localises to the cytoplasm. Part of a sulfur-relay system required for 2-thiolation of 5-methylaminomethyl-2-thiouridine (mnm(5)s(2)U) at tRNA wobble positions. This is Protein TusC from Escherichia coli O157:H7.